Consider the following 266-residue polypeptide: Norfluorocurarine synthase 2 (266 aa).

Residues 11 to 121 (HFVLVHGAGH…IMPDSTHPPI (111 aa)) form the AB hydrolase-1 domain. Catalysis depends on residues Ser86, Asp216, and His244.

It belongs to the AB hydrolase superfamily. As to quaternary structure, homodimer. As to expression, mainly expressed in roots.

The enzyme catalyses 17-dehydropreakuammicine + H2O = norfluorocurarine + methanol + CO2. It participates in alkaloid biosynthesis. Its function is as follows. Hydrolase involved in the biosynthesis of curare monoterpene indole alkaloids (MIAs), natural products such as strychnine, a neurotoxic compound used as a pesticide to control rodents, and its pharmacologically active derivatives, including brucine, used to regulate blood pressure. Curare alkaloids act as animal glycine receptor antagonists. Catalyzes the conversion of dehydropreakuammicine to norfluorocurarine. The polypeptide is Norfluorocurarine synthase 2 (Strychnos nux-vomica (Poison nut)).